Here is a 352-residue protein sequence, read N- to C-terminus: Histidine biosynthesis bifunctional protein HisB (352 aa).

Positions 1 to 164 (MSQKILFIDR…EIENEILSSF (164 aa)) are histidinol-phosphatase. Asp-9 (nucleophile) is an active-site residue. Asp-9 and Asp-11 together coordinate Mg(2+). The Proton donor role is filled by Asp-11. Zn(2+) is bound by residues Cys-93, His-95, Cys-101, and Cys-103. Asp-130 is a binding site for Mg(2+). Residues 165–352 (RSASYQRTTK…ENLASSKGVI (188 aa)) are imidazoleglycerol-phosphate dehydratase.

The protein in the N-terminal section; belongs to the histidinol-phosphatase family. It in the C-terminal section; belongs to the imidazoleglycerol-phosphate dehydratase family. Mg(2+) is required as a cofactor. Zn(2+) serves as cofactor.

The protein resides in the cytoplasm. It carries out the reaction D-erythro-1-(imidazol-4-yl)glycerol 3-phosphate = 3-(imidazol-4-yl)-2-oxopropyl phosphate + H2O. The enzyme catalyses L-histidinol phosphate + H2O = L-histidinol + phosphate. It participates in amino-acid biosynthesis; L-histidine biosynthesis; L-histidine from 5-phospho-alpha-D-ribose 1-diphosphate: step 6/9. The protein operates within amino-acid biosynthesis; L-histidine biosynthesis; L-histidine from 5-phospho-alpha-D-ribose 1-diphosphate: step 8/9. In Campylobacter jejuni subsp. doylei (strain ATCC BAA-1458 / RM4099 / 269.97), this protein is Histidine biosynthesis bifunctional protein HisB.